The chain runs to 296 residues: Protease HtpX homolog (296 aa).

The next 2 helical transmembrane spans lie at 14-34 (VVLLIVFFCLLAAIGAAVGYL) and 39-59 (YQFGLVLALIIGVIYAVSMIF). Residue histidine 143 coordinates Zn(2+). The active site involves glutamate 144. Zn(2+) is bound at residue histidine 147. A run of 2 helical transmembrane segments spans residues 158-178 (IAVALASAVTLISSIGSRMLF) and 195-215 (ILVLIFSILSLILAPLAASLV). Glutamate 224 provides a ligand contact to Zn(2+).

It belongs to the peptidase M48B family. Zn(2+) serves as cofactor.

The protein resides in the cell membrane. This is Protease HtpX homolog from Streptococcus agalactiae serotype III (strain NEM316).